The chain runs to 868 residues: Phospholipase D delta (868 aa).

A C2 domain is found at 1–154 (MAEKVSEDVM…ASGERISGWF (154 aa)). Residue aspartate 216 coordinates Ca(2+). One can recognise a PLD phosphodiesterase 1 domain in the interval 368-403 (TLFTHHQKCVLVDTQAVGNNRKVTAFIGGLDLCDGR). Active-site residues include histidine 373, lysine 375, and aspartate 380. Position 373 (histidine 373) interacts with a 1,2-diacyl-sn-glycero-3-phosphate. Ca(2+) is bound by residues histidine 409 and histidine 440. A 1,2-diacyl-sn-glycero-3-phosphate is bound by residues glutamine 588 and histidine 718. The region spanning 713 to 740 (FMIYVHAKGMIVDDEYVLMGSANINQRS) is the PLD phosphodiesterase 2 domain. Residues histidine 718, lysine 720, and aspartate 725 contribute to the active site. A Ca(2+)-binding site is contributed by glutamate 781.

It belongs to the phospholipase D family. C2-PLD subfamily. Interacts with GAPC1 and GAPC2. Increased interaction in the presence of H(2)O(2). Ca(2+) serves as cofactor. In terms of tissue distribution, expressed in roots, leaves, stems, siliques and flowers. Strongly expressed in the vascular tissues of cotyledons and leaves under dehydration stress conditions. Expression is higher in old leaves than in young leaves. Expressed in leaves and guard cells. The isoform 2 may not be present in siliques.

Its subcellular location is the cell membrane. It catalyses the reaction a 1,2-diacyl-sn-glycero-3-phosphocholine + H2O = a 1,2-diacyl-sn-glycero-3-phosphate + choline + H(+). With respect to regulation, activated by free oleic acid in a dose-dependent manner and less effectively by other unsaturated fatty acids such as linoleic and linolenic acids. Not activated by the saturated fatty acids stearic and palmitic acids. PIP2 and Ca(2+) stimulate activity by promoting lipid substrate binding to the active site. Activated by H(2)O(2) and by binding to GAPC. In terms of biological role, hydrolyzes glycerol-phospholipids at the terminal phosphodiesteric bond to generate phosphatidic acids (PA). May be involved in PA accumulation in the dehydration stress response and in the transduction of hormonal and environmental signals to the microtubules cytoskeleton. Prefers phosphatidylethanolamine to phosphatidylcholine as substrate. Involved in H(2)O(2) and abscisic acid (ABA)-induced stomatal closure. Involved in nitric oxide (NO) signaling during stomatal closure. Plays a positive role in ABA-promoted senescence. Involved in basal defense and nonhost resistance. This chain is Phospholipase D delta, found in Arabidopsis thaliana (Mouse-ear cress).